Consider the following 501-residue polypeptide: MEMMQLSFASAVVYSLIFFVFLLVKQLLKPKSHKKLPPGPWTLPIIGNLHQILGALPHRIFKDLSDKYGPLMRIMMGERTTIIVSSATMAKVVLHTHGLAVANRPINSVAKVICYNNLGVTFAEYGEYLKQLRQLYMLELLSPKRVQSFSAVFEDELQTFVKSIKSEVGQPMIIYEKSVTYLYSTICRVMLGNVCNEREKLIKICKKVSFYSAAPIRIEDLFPSMKFIISRIFSTNSILKDLLKDLDDVLDIVIAERENSQYAQEEEDMLGILLKHKRSDGNNSKLKITNKDIKAIIFELLLAATLSVADVVEWAMVEILRHPKVLKQVHDEVRQAFKGQKTITGSDLGKLEYLHMCFKESTRLHPAAPLLFPREAREEFEIDGYTIPKGSWVLTNYWAVGRDPRIWPKPDEFDPERFRNSDIEFYGNHFELIPFGTGRRGCPGILFGITEALYLLAALFYHFDWKLAGGITPEEIDMTEVFGAGCILKNPLNLIPRLAEN.

The helical transmembrane segment at 4-24 (MQLSFASAVVYSLIFFVFLLV) threads the bilayer. N-linked (GlcNAc...) asparagine glycosylation occurs at Asn-282. Cys-442 contacts heme.

It belongs to the cytochrome P450 family. The cofactor is heme.

The protein localises to the membrane. It carries out the reaction (19E)-geissoschizine + reduced [NADPH--hemoprotein reductase] + O2 = rhazimal + oxidized [NADPH--hemoprotein reductase] + 2 H2O + H(+). The enzyme catalyses (19E)-geissoschizine + reduced [NADPH--hemoprotein reductase] + O2 = akuammicine + formate + oxidized [NADPH--hemoprotein reductase] + H2O + H(+). It participates in alkaloid biosynthesis. Functionally, a cytochrome P450 monooxygenase involved in the biosynthesis of akuammilan monoterpene indole alkaloids (MIAs) natural products, components with various biological properties such as antidiabetic, antibacterial, anti-inflammatory, anticancer, and antimalarial activities. Catalyzes the conversion of geissoschizine to rhazimal. Can also, with lower efficiency, support the conversion of geissoschizine to akuammicine. The chain is Rhazimal synthase from Alstonia scholaris (Dogbane).